The following is a 246-amino-acid chain: 4-hydroxy-tetrahydrodipicolinate reductase (246 aa).

Residues 7–12 (GATGRT), 84–86 (GTT), and 108–111 (ASNF) contribute to the NAD(+) site. The active-site Proton donor/acceptor is histidine 140. Histidine 141 lines the (S)-2,3,4,5-tetrahydrodipicolinate pocket. Catalysis depends on lysine 144, which acts as the Proton donor. 150–151 (GT) contributes to the (S)-2,3,4,5-tetrahydrodipicolinate binding site.

It belongs to the DapB family.

The protein localises to the cytoplasm. It catalyses the reaction (S)-2,3,4,5-tetrahydrodipicolinate + NAD(+) + H2O = (2S,4S)-4-hydroxy-2,3,4,5-tetrahydrodipicolinate + NADH + H(+). It carries out the reaction (S)-2,3,4,5-tetrahydrodipicolinate + NADP(+) + H2O = (2S,4S)-4-hydroxy-2,3,4,5-tetrahydrodipicolinate + NADPH + H(+). It participates in amino-acid biosynthesis; L-lysine biosynthesis via DAP pathway; (S)-tetrahydrodipicolinate from L-aspartate: step 4/4. Its function is as follows. Catalyzes the conversion of 4-hydroxy-tetrahydrodipicolinate (HTPA) to tetrahydrodipicolinate. In Natronomonas pharaonis (strain ATCC 35678 / DSM 2160 / CIP 103997 / JCM 8858 / NBRC 14720 / NCIMB 2260 / Gabara) (Halobacterium pharaonis), this protein is 4-hydroxy-tetrahydrodipicolinate reductase.